Reading from the N-terminus, the 404-residue chain is DNA gyrase subunit B (404 aa).

In terms of domain architecture, Toprim spans 321-404; that stretch reads SEIYIVEGDS…VIIMTDADVD (84 aa). E327, D400, and D402 together coordinate Mg(2+).

This sequence belongs to the type II topoisomerase GyrB family. As to quaternary structure, heterotetramer, composed of two GyrA and two GyrB chains. In the heterotetramer, GyrA contains the active site tyrosine that forms a transient covalent intermediate with DNA, while GyrB binds cofactors and catalyzes ATP hydrolysis. Requires Mg(2+) as cofactor. The cofactor is Mn(2+). It depends on Ca(2+) as a cofactor.

Its subcellular location is the cytoplasm. The catalysed reaction is ATP-dependent breakage, passage and rejoining of double-stranded DNA.. Functionally, a type II topoisomerase that negatively supercoils closed circular double-stranded (ds) DNA in an ATP-dependent manner to modulate DNA topology and maintain chromosomes in an underwound state. Negative supercoiling favors strand separation, and DNA replication, transcription, recombination and repair, all of which involve strand separation. Also able to catalyze the interconversion of other topological isomers of dsDNA rings, including catenanes and knotted rings. Type II topoisomerases break and join 2 DNA strands simultaneously in an ATP-dependent manner. This chain is DNA gyrase subunit B (gyrB), found in Bacillus cereus.